The following is a 79-amino-acid chain: Probable [Fe-S]-dependent transcriptional repressor (79 aa).

Residues Cys54, Cys59, Cys62, and Cys68 each contribute to the iron-sulfur cluster site.

The protein belongs to the FeoC family.

Functionally, may function as a transcriptional regulator that controls feoABC expression. This chain is Probable [Fe-S]-dependent transcriptional repressor, found in Photorhabdus laumondii subsp. laumondii (strain DSM 15139 / CIP 105565 / TT01) (Photorhabdus luminescens subsp. laumondii).